The sequence spans 102 residues: NADH-quinone oxidoreductase subunit K (102 aa).

3 helical membrane-spanning segments follow: residues 5–25, 31–51, and 65–85; these read LSHYLTVSAILFTIGVFGIFL, IVILMSIELILLAVNINMVAF, and LFILTVAAAEAAIGLAILVVF.

The protein belongs to the complex I subunit 4L family. In terms of assembly, NDH-1 is composed of 14 different subunits. Subunits NuoA, H, J, K, L, M, N constitute the membrane sector of the complex.

The protein resides in the cell inner membrane. The catalysed reaction is a quinone + NADH + 5 H(+)(in) = a quinol + NAD(+) + 4 H(+)(out). In terms of biological role, NDH-1 shuttles electrons from NADH, via FMN and iron-sulfur (Fe-S) centers, to quinones in the respiratory chain. The immediate electron acceptor for the enzyme in this species is believed to be ubiquinone. Couples the redox reaction to proton translocation (for every two electrons transferred, four hydrogen ions are translocated across the cytoplasmic membrane), and thus conserves the redox energy in a proton gradient. The protein is NADH-quinone oxidoreductase subunit K of Agrobacterium fabrum (strain C58 / ATCC 33970) (Agrobacterium tumefaciens (strain C58)).